Consider the following 475-residue polypeptide: Glycogen synthase (475 aa).

K15 provides a ligand contact to ADP-alpha-D-glucose.

This sequence belongs to the glycosyltransferase 1 family. Bacterial/plant glycogen synthase subfamily.

It catalyses the reaction [(1-&gt;4)-alpha-D-glucosyl](n) + ADP-alpha-D-glucose = [(1-&gt;4)-alpha-D-glucosyl](n+1) + ADP + H(+). It participates in glycan biosynthesis; glycogen biosynthesis. Its function is as follows. Synthesizes alpha-1,4-glucan chains using ADP-glucose. This Anaeromyxobacter sp. (strain K) protein is Glycogen synthase.